The chain runs to 349 residues: MKIGILLSGGVDSAVALYQLKNEGYEIVAYHMKTMKDEFFLNRQVKHKICCSPSDTVDAKLIAKTAGVPLKVVNLHEIFKEKIITYYLQEYTRGRTPNPCYFCNRFIKFGYLMDLMIEDGVDVISSGHYARVVDGKLLKALDKEKDQSYFLASIEKERLKKIVFPNGDKTKDEIRDIAKKAGIHVHSKAESQDLCFIPDGDQKRFFEEQGIKIKSGPIFDKYGKKIGEHTGLINYTIGQRKIGVSAGERVYVTRICADRNALIVGNEKDVQSDKFSVIDFNLLVDIDKNFEATVKVRKNSTEVPCKVSLENHRVIVKTTMPVFAVAPGQAAVFYRGDIVIGAGIIEKIL.

Residues 6–13 and methionine 32 contribute to the ATP site; that span reads LLSGGVDS. Cysteine 103 functions as the Nucleophile in the catalytic mechanism. Cysteines 103 and 195 form a disulfide. Glycine 127 contributes to the ATP binding site. The interaction with tRNA stretch occupies residues 145 to 147; sequence KDQ. The Cysteine persulfide intermediate role is filled by cysteine 195.

The protein belongs to the MnmA/TRMU family.

The protein resides in the cytoplasm. It catalyses the reaction S-sulfanyl-L-cysteinyl-[protein] + uridine(34) in tRNA + AH2 + ATP = 2-thiouridine(34) in tRNA + L-cysteinyl-[protein] + A + AMP + diphosphate + H(+). Catalyzes the 2-thiolation of uridine at the wobble position (U34) of tRNA, leading to the formation of s(2)U34. This is tRNA-specific 2-thiouridylase MnmA from Pseudothermotoga lettingae (strain ATCC BAA-301 / DSM 14385 / NBRC 107922 / TMO) (Thermotoga lettingae).